A 348-amino-acid polypeptide reads, in one-letter code: Phosphoribosylformylglycinamidine cyclo-ligase (348 aa).

It belongs to the AIR synthase family.

The protein localises to the cytoplasm. It catalyses the reaction 2-formamido-N(1)-(5-O-phospho-beta-D-ribosyl)acetamidine + ATP = 5-amino-1-(5-phospho-beta-D-ribosyl)imidazole + ADP + phosphate + H(+). It functions in the pathway purine metabolism; IMP biosynthesis via de novo pathway; 5-amino-1-(5-phospho-D-ribosyl)imidazole from N(2)-formyl-N(1)-(5-phospho-D-ribosyl)glycinamide: step 2/2. The chain is Phosphoribosylformylglycinamidine cyclo-ligase from Cereibacter sphaeroides (strain ATCC 17025 / ATH 2.4.3) (Rhodobacter sphaeroides).